Reading from the N-terminus, the 208-residue chain is GTP cyclohydrolase 1 (208 aa).

Cysteine 98, histidine 101, and cysteine 169 together coordinate Zn(2+).

The protein belongs to the GTP cyclohydrolase I family. Toroid-shaped homodecamer, composed of two pentamers of five dimers.

It catalyses the reaction GTP + H2O = 7,8-dihydroneopterin 3'-triphosphate + formate + H(+). Its pathway is cofactor biosynthesis; 7,8-dihydroneopterin triphosphate biosynthesis; 7,8-dihydroneopterin triphosphate from GTP: step 1/1. This Agrobacterium fabrum (strain C58 / ATCC 33970) (Agrobacterium tumefaciens (strain C58)) protein is GTP cyclohydrolase 1.